A 274-amino-acid chain; its full sequence is uncharacterized protein (274 aa).

A compositionally biased stretch (basic and acidic residues) spans 1–15; that stretch reads MEESKTKRKEDRIDL. Positions 1-40 are disordered; sequence MEESKTKRKEDRIDLKNTPPQKKSKRDSTNDETARTSLRS. One can recognise a G-patch domain in the interval 41–87; it reads IMPRGYKMMENMGYKEGETLGSNESALKEPIKVEINTKRRGIRAEKP.

It localises to the cytoplasm. Its subcellular location is the nucleus. This is an uncharacterized protein from Saccharomyces cerevisiae (strain ATCC 204508 / S288c) (Baker's yeast).